Here is a 453-residue protein sequence, read N- to C-terminus: Nuclear distribution protein nudF-2 (453 aa).

Positions 9–41 (QADELHRALIAYLTAANLPNTAAALREELNLSE) constitute a LisH domain. A coiled-coil region spans residues 62 to 88 (SVVRLQKKIMDLESRNHILQSELDNAT). The disordered stretch occupies residues 84–107 (LDNATPTSRQNKDPVAWLPRAPPR). 7 WD repeats span residues 112–153 (SHRD…RTIK), 155–195 (HTKA…KNIR), 199–239 (GHDH…CVKT), 242–281 (GHAE…PEPK), 286–345 (GHEH…IKTL), 347–386 (GHDN…KCVK), and 391–449 (AHGH…LNVR).

It belongs to the WD repeat LIS1/nudF family. Self-associates. Interacts with ro-11/nde1 and dynein.

It localises to the cytoplasm. Its subcellular location is the cytoskeleton. It is found in the spindle pole. Functionally, positively regulates the activity of the minus-end directed microtubule motor protein dynein. May enhance dynein-mediated microtubule sliding by targeting dynein to the microtubule plus end. Required for nuclear migration during vegetative growth as well as development. Required for retrograde early endosome (EE) transport from the hyphal tip. Required for localization of dynein to the mitotic spindle poles. Recruits additional proteins to the dynein complex at SPBs. The polypeptide is Nuclear distribution protein nudF-2 (nmp-1) (Neurospora crassa (strain ATCC 24698 / 74-OR23-1A / CBS 708.71 / DSM 1257 / FGSC 987)).